A 423-amino-acid polypeptide reads, in one-letter code: Ferrochelatase, mitochondrial (423 aa).

Residues 1 to 40 (MIRFCPSCFALKRTAPVLNHTSRLGNYFNNTFSKFSVNRM) constitute a mitochondrion transit peptide. Residue Cys200 coordinates [2Fe-2S] cluster. The active site involves Asp385. Residues Cys405, Cys408, and Cys413 each contribute to the [2Fe-2S] cluster site.

The protein belongs to the ferrochelatase family. As to quaternary structure, monomer. [2Fe-2S] cluster is required as a cofactor.

It is found in the mitochondrion inner membrane. The protein resides in the cytoplasm. Its subcellular location is the nucleus. It carries out the reaction heme b + 2 H(+) = protoporphyrin IX + Fe(2+). Its pathway is porphyrin-containing compound metabolism; protoheme biosynthesis; protoheme from protoporphyrin-IX: step 1/1. Its function is as follows. Catalyzes the ferrous insertion into protoporphyrin IX. This Schizosaccharomyces pombe (strain 972 / ATCC 24843) (Fission yeast) protein is Ferrochelatase, mitochondrial (hem15).